Consider the following 116-residue polypeptide: Protein V2 (116 aa).

The protein belongs to the geminiviridae protein AV2/V2 family. As to quaternary structure, interacts with host SGS3.

It is found in the host cytoplasm. Its subcellular location is the host perinuclear region. Through its interaction with host SGS3, acts as a suppressor of RNA-mediated gene silencing, also known as post-transcriptional gene silencing (PTGS), a mechanism of plant viral defense that limits the accumulation of viral RNAs. The protein is Protein V2 of Tomato yellow leaf curl virus (strain Israel) (TYLCV).